Here is a 260-residue protein sequence, read N- to C-terminus: DNA-binding protein RFXANK (260 aa).

The interval 1–79 (MELTQPAEDL…STTLTNRQRG (79 aa)) is disordered. Residues 22-33 (GDPEDPGEEAAD) show a composition bias toward acidic residues. Residues 57 to 77 (SVSSPQAGSSLKHSTTLTNRQ) show a composition bias toward polar residues. ANK repeat units lie at residues 89-118 (LDSLSIHQLAAQGELDQLKEHLRKGDNLVN), 123-152 (RGFTPLIWASAFGEIETVRFLLEWGADPHI), 156-185 (ERESALSLASTGGYTDIVGLLLERDVDINI), 189-218 (NGGTPLLYAVRGNHVKCVEALLARGADLTT), and 222-251 (SGYTPMDLAVALGYRKVQQVIENHILKLFQ).

Forms homodimers. The RFX heterotetrameric complex consists of 2 molecules of RFX5 and one each of RFXAP and RFX-B/RFXANK; with each subunit representing a separate complementation group. Interacts (via ankyrin repeats) with RFX5 (via PxLPxI/L motif); the interaction is direct. RFX forms cooperative DNA binding complexes with X2BP and CBF/NF-Y. RFX associates with CIITA to form an active transcriptional complex. Interacts with RAF1. Interacts (via ankyrin repeats) with RFX7 (via PxLPxI/L motif). Phosphorylated by RAF1. Ubiquitous.

It localises to the cytoplasm. The protein resides in the nucleus. Its function is as follows. Activates transcription from class II MHC promoters. Activation requires the activity of the MHC class II transactivator/CIITA. May regulate other genes in the cell. RFX binds the X1 box of MHC-II promoters. May also potentiate the activation of RAF1. Isoform 2 is not involved in the positive regulation of MHC class II genes. This chain is DNA-binding protein RFXANK (RFXANK), found in Homo sapiens (Human).